The primary structure comprises 194 residues: A-type ATP synthase subunit E (194 aa).

The protein belongs to the V-ATPase E subunit family. In terms of assembly, has multiple subunits with at least A(3), B(3), C, D, E, F, H, I and proteolipid K(x).

It is found in the cell membrane. In terms of biological role, component of the A-type ATP synthase that produces ATP from ADP in the presence of a proton gradient across the membrane. This Haloferax volcanii (strain ATCC 29605 / DSM 3757 / JCM 8879 / NBRC 14742 / NCIMB 2012 / VKM B-1768 / DS2) (Halobacterium volcanii) protein is A-type ATP synthase subunit E.